Here is a 665-residue protein sequence, read N- to C-terminus: DNA ligase (665 aa).

NAD(+) is bound by residues 31–35 (DEEFD), 80–81 (SL), and E111. The active-site N6-AMP-lysine intermediate is the K113. Residues R134, E171, K287, and K311 each coordinate NAD(+). Zn(2+)-binding residues include C405, C408, C423, and C429. The region spanning 588-665 (FTNHAFQGKI…NEKEFISLCH (78 aa)) is the BRCT domain.

The protein belongs to the NAD-dependent DNA ligase family. LigA subfamily. Requires Mg(2+) as cofactor. It depends on Mn(2+) as a cofactor.

The enzyme catalyses NAD(+) + (deoxyribonucleotide)n-3'-hydroxyl + 5'-phospho-(deoxyribonucleotide)m = (deoxyribonucleotide)n+m + AMP + beta-nicotinamide D-nucleotide.. In terms of biological role, DNA ligase that catalyzes the formation of phosphodiester linkages between 5'-phosphoryl and 3'-hydroxyl groups in double-stranded DNA using NAD as a coenzyme and as the energy source for the reaction. It is essential for DNA replication and repair of damaged DNA. The chain is DNA ligase from Protochlamydia amoebophila (strain UWE25).